A 348-amino-acid polypeptide reads, in one-letter code: NAC domain-containing protein 101 (348 aa).

The NAC domain occupies 7-156 (IPPGYRFHPT…GWVVCRAFKK (150 aa)). The DNA-binding element occupies 107 to 162 (VGMRKTLVFYKGRAPNGQKSDWIMHEYRLETDENGPPHEEGWVVCRAFKKKLTTMN). A disordered region spans residues 325 to 348 (MVSMNASSSSSPCSFYSWAQNTHT). Residues 327–341 (SMNASSSSSPCSFYS) show a composition bias toward low complexity.

Belongs to the plant vascular related NAC-domain protein family. Homodimer. As to expression, expressed in root inner metaxylem vessels and in hypocotyl vessels. Present in root developing xylems. Accumulates in the xylem but not in interfascicular fibers or pith cells in inflorescence stems. Absent from secondary xylem in roots.

The protein resides in the nucleus. Its function is as follows. Transcription activator that binds to the secondary wall NAC binding element (SNBE), 5'-(T/A)NN(C/T)(T/C/G)TNNNNNNNA(A/C)GN(A/C/T)(A/T)-3', and to the tracheary elements (TE) specific regulating cis-element (TERE), 5'-CTTNAAAGCNA-3', in the promoter of target genes (e.g. genes involved in secondary wall biosynthesis, cell wall modification such as xylan accumulation, and programmed cell death). Involved in xylem formation in roots and shoots, especially regulating metaxylem vessel differentiation by promoting immature xylem vessel-specific genes expression, especially genes regulating programmed cell death (PCD) and secondary wall formation in tracheary elements (TE). Can activate MYB25, MYB46, MYB58, MYB63, MYB83, MYB103, CESA4, LBD15, LBD30, ERF115, XCP1, XCP2, NAC010/SND3, KNAT7, ASL19 and ASL20 expression. This Arabidopsis thaliana (Mouse-ear cress) protein is NAC domain-containing protein 101.